Reading from the N-terminus, the 446-residue chain is G patch domain-containing protein 4 (446 aa).

At M1 the chain carries N-acetylmethionine. T4 bears the Phosphothreonine mark. The G-patch domain maps to 11–57; it reads GMKFAEEQLLKHGWTQGKGLGRKENGITQALRVTLKQDTHGVGHDPA. K46 is covalently cross-linked (Glycyl lysine isopeptide (Lys-Gly) (interchain with G-Cter in SUMO2)). A Phosphothreonine modification is found at T116. Disordered stretches follow at residues 116-140 and 188-446; these read TSGGEKPNKDLESCSDDDNQGSKSP and QDPG…KKRD. A phosphoserine mark is found at S128, S130, and S139. Residues 166–251 are a coiled coil; it reads TMKAKLARLE…KKKRRHQEGK (86 aa). Residues 219–237 show a composition bias toward basic and acidic residues; that stretch reads ASERNDADEKHPEHAEQNI. Over residues 238–248 the composition is skewed to basic residues; it reads RKSKKKKRRHQ. 4 stretches are compositionally biased toward basic and acidic residues: residues 249-268, 297-328, 363-375, and 392-409; these read EGKVSDEREGTTKGNEKEDA, HHEEEKMGVLEEGGKGKEAAGSVRTEEVESRA, REAESRACSDGRS, and LDVRDEKDGGAREAESRA. Basic residues-rich tracts occupy residues 416–427 and 437–446; these read RGKRKRQQHPKK and KAKKKQKKRD.

This is G patch domain-containing protein 4 (GPATCH4) from Homo sapiens (Human).